The sequence spans 615 residues: Membrane protein insertase YidC (615 aa).

Transmembrane regions (helical) follow at residues 9–29 (LMFIVSAFAILIGYQFFVLGP), 384–404 (LVGNFGLAILLLTVVLKLVLY), 458–478 (LPMLIQIPVFYALYKVLTVTI), 516–536 (LIGAMIAHLGVWPLLYGFTMW), and 556–576 (WFPVIFTFTLSGFAVGLVIYW).

Belongs to the OXA1/ALB3/YidC family. Type 1 subfamily. As to quaternary structure, interacts with the Sec translocase complex via SecD. Specifically interacts with transmembrane segments of nascent integral membrane proteins during membrane integration.

The protein resides in the cell inner membrane. Its function is as follows. Required for the insertion and/or proper folding and/or complex formation of integral membrane proteins into the membrane. Involved in integration of membrane proteins that insert both dependently and independently of the Sec translocase complex, as well as at least some lipoproteins. Aids folding of multispanning membrane proteins. This Caulobacter vibrioides (strain ATCC 19089 / CIP 103742 / CB 15) (Caulobacter crescentus) protein is Membrane protein insertase YidC.